The primary structure comprises 367 residues: Uroporphyrinogen decarboxylase (367 aa).

Met1 carries the post-translational modification N-acetylmethionine. Positions 37, 39, 41, 50, 86, 164, 219, and 339 each coordinate coproporphyrinogen I. The coproporphyrinogen III site is built by Arg37, Ala39, and Arg41. Coproporphyrinogen III contacts are provided by Asp86, Tyr164, Ser219, and His339.

Belongs to the uroporphyrinogen decarboxylase family. In terms of assembly, homodimer.

It is found in the cytoplasm. The protein resides in the cytosol. The enzyme catalyses uroporphyrinogen III + 4 H(+) = coproporphyrinogen III + 4 CO2. It carries out the reaction uroporphyrinogen I + 4 H(+) = coproporphyrinogen I + 4 CO2. It participates in porphyrin-containing compound metabolism; protoporphyrin-IX biosynthesis; coproporphyrinogen-III from 5-aminolevulinate: step 4/4. Its function is as follows. Catalyzes the sequential decarboxylation of the four acetate side chains of uroporphyrinogen to form coproporphyrinogen and participates in the fifth step in the heme biosynthetic pathway. Isomer I or isomer III of uroporphyrinogen may serve as substrate, but only coproporphyrinogen III can ultimately be converted to heme. In vitro also decarboxylates pentacarboxylate porphyrinogen I. The polypeptide is Uroporphyrinogen decarboxylase (Mus musculus (Mouse)).